Here is a 60-residue protein sequence, read N- to C-terminus: Large ribosomal subunit protein uL30 (60 aa).

Belongs to the universal ribosomal protein uL30 family. In terms of assembly, part of the 50S ribosomal subunit.

This is Large ribosomal subunit protein uL30 from Streptomyces avermitilis (strain ATCC 31267 / DSM 46492 / JCM 5070 / NBRC 14893 / NCIMB 12804 / NRRL 8165 / MA-4680).